The sequence spans 497 residues: Protein DETOXIFICATION 25 (497 aa).

12 helical membrane-spanning segments follow: residues 43 to 63 (LPSTLFRVMSFGCVVVAQAFI), 70 to 90 (GLAAYALLQSTFIRFIYGIMA), 121 to 141 (IVDTFIATLFVPFIVLAGPIL), 157 to 177 (IYPWVIPYLYSIVFTMTMQMY), 186 to 206 (IIGILSTLALVLDIAATWWCV), 216 to 236 (ALLGLNISSWSVAIAEFVYVF), 261 to 281 (LSISSGFMLCLEYWYMSIIVL), 291 to 311 (IAISAFSICQYIYSWEMNICF), 339 to 359 (VVLVVSAVIGVICSALCLAFG), 381 to 401 (IVLSISILFNIIQPILSGVAI), 416 to 436 (SYYAIGVPLGVLLVYVFNFGI), and 438 to 458 (GLWSGMLAGVGIQTLILCYVI).

Belongs to the multi antimicrobial extrusion (MATE) (TC 2.A.66.1) family.

The protein resides in the membrane. This is Protein DETOXIFICATION 25 from Arabidopsis thaliana (Mouse-ear cress).